The chain runs to 661 residues: Fructose-1,6-bisphosphatase class 3 (661 aa).

Belongs to the FBPase class 3 family. The cofactor is Mn(2+).

The enzyme catalyses beta-D-fructose 1,6-bisphosphate + H2O = beta-D-fructose 6-phosphate + phosphate. The protein operates within carbohydrate biosynthesis; gluconeogenesis. The polypeptide is Fructose-1,6-bisphosphatase class 3 (Clostridioides difficile (strain 630) (Peptoclostridium difficile)).